Here is a 441-residue protein sequence, read N- to C-terminus: Cysteine--tRNA ligase (441 aa).

Cysteine 24 is a Zn(2+) binding site. The short motif at 26 to 36 is the 'HIGH' region element; that stretch reads PTVYNYIHIGN. Cysteine 204, histidine 230, and glutamate 234 together coordinate Zn(2+). Residues 262–266 carry the 'KMSKS' region motif; that stretch reads KMSKS. Residue lysine 265 participates in ATP binding.

The protein belongs to the class-I aminoacyl-tRNA synthetase family. In terms of assembly, monomer. Zn(2+) is required as a cofactor.

The protein resides in the cytoplasm. It catalyses the reaction tRNA(Cys) + L-cysteine + ATP = L-cysteinyl-tRNA(Cys) + AMP + diphosphate. This chain is Cysteine--tRNA ligase, found in Mycoplasma capricolum subsp. capricolum (strain California kid / ATCC 27343 / NCTC 10154).